The chain runs to 354 residues: Protein RecA (354 aa).

An ATP-binding site is contributed by 67–74 (GPESSGKT). The disordered stretch occupies residues 331–354 (GGANSSDSKTESDENIDLETGEVF). The segment covering 343–354 (DENIDLETGEVF) has biased composition (acidic residues).

Belongs to the RecA family.

It localises to the cytoplasm. Can catalyze the hydrolysis of ATP in the presence of single-stranded DNA, the ATP-dependent uptake of single-stranded DNA by duplex DNA, and the ATP-dependent hybridization of homologous single-stranded DNAs. It interacts with LexA causing its activation and leading to its autocatalytic cleavage. The chain is Protein RecA from Shewanella frigidimarina (strain NCIMB 400).